The chain runs to 359 residues: Peptide chain release factor 1 (359 aa).

Residue Gln236 is modified to N5-methylglutamine.

The protein belongs to the prokaryotic/mitochondrial release factor family. In terms of processing, methylated by PrmC. Methylation increases the termination efficiency of RF1.

Its subcellular location is the cytoplasm. Functionally, peptide chain release factor 1 directs the termination of translation in response to the peptide chain termination codons UAG and UAA. The chain is Peptide chain release factor 1 from Streptococcus pneumoniae serotype 4 (strain ATCC BAA-334 / TIGR4).